The chain runs to 230 residues: MKNPMLEVVSLLLEKLLLISNFTLFSSGAAGEDKGRNSFYETSSFHRGDVLEVPRTHLTHYGIYLGDNRVAHMMPDILLALTDDMGRTQKVVSNKRLILGVIVKVASIRVDTVEDFAYGANILVNHLDESLQKKALLNEEVARRAEKLLGFTPYSLLWNNCEHFVTYCRYGTPISPQSDKFCETVKIIIRDQRSVLASAVLGLASIVCTGLVSYTTLPAIFIPFFLWMAG.

Residues 1-194 (MKNPMLEVVS…VKIIIRDQRS (194 aa)) are Cytoplasmic-facing. Residues 50–177 (VLEVPRTHLT…CRYGTPISPQ (128 aa)) form the LRAT domain. Catalysis depends on residues histidine 60 and histidine 72. The active-site Acyl-thioester intermediate is the cysteine 161. A helical transmembrane segment spans residues 195 to 215 (VLASAVLGLASIVCTGLVSYT). The Lumenal portion of the chain corresponds to 216–230 (TLPAIFIPFFLWMAG).

It belongs to the H-rev107 family. Hepatic stellate cells and endothelial cells (at protein level). Found at high levels in testis and liver, followed by retinal pigment epithelium, small intestine, prostate, pancreas and colon. Low expression observed in brain. In fetal tissues, expressed in retinal pigment epithelium and liver, and barely in the brain.

It localises to the endoplasmic reticulum membrane. The protein localises to the rough endoplasmic reticulum. The protein resides in the endosome. It is found in the multivesicular body. Its subcellular location is the cytoplasm. It localises to the perinuclear region. The enzyme catalyses all-trans-retinol--[retinol-binding protein] + a 1,2-diacyl-sn-glycero-3-phosphocholine = apo--[retinol-binding protein] + an all-trans-retinyl ester + a 2-acyl-sn-glycero-3-phosphocholine. The catalysed reaction is 1,2-dihexadecanoyl-sn-glycero-3-phosphocholine + all-trans-retinol = all-trans-retinyl hexadecanoate + 2-hexadecanoyl-sn-glycero-3-phosphocholine. It catalyses the reaction 1,2-diheptanoyl-sn-glycero-3-phosphocholine + all-trans-retinol--[retinol-binding protein] = all-trans-retinyl heptanoate + 2-heptanoyl-sn-glycero-3-phosphocholine + apo--[retinol-binding protein]. It carries out the reaction 1,2-dioctanoyl-sn-glycero-3-phosphocholine + all-trans-retinol--[retinol-binding protein] = 2-octanoyl-sn-glycero-3-phosphocholine + all-trans-retinyl octanoate + apo--[retinol-binding protein]. The enzyme catalyses all-trans-retinol--[retinol-binding protein] + 1,2-dihexadecanoyl-sn-glycero-3-phosphocholine = apo--[retinol-binding protein] + all-trans-retinyl hexadecanoate + 2-hexadecanoyl-sn-glycero-3-phosphocholine. The catalysed reaction is 1,2-didodecanoyl-sn-glycero-3-phosphocholine + all-trans-retinol--[retinol-binding protein] = 2-dodecanoyl-sn-glycero-3-phosphocholine + all-trans-retinyl dodecanoate + apo--[retinol-binding protein]. The protein operates within cofactor metabolism; retinol metabolism. Inhibited by all-trans-retinyl alpha-bromoacetate and N-boc-L-biocytinyl-11-aminoundecane chloro-methyl ketone (BACMK). In terms of biological role, transfers the acyl group from the sn-1 position of phosphatidylcholine to all-trans retinol, producing all-trans retinyl esters. Retinyl esters are storage forms of vitamin A. LRAT plays a critical role in vision. It provides the all-trans retinyl ester substrates for the isomerohydrolase which processes the esters into 11-cis-retinol in the retinal pigment epithelium; due to a membrane-associated alcohol dehydrogenase, 11 cis-retinol is oxidized and converted into 11-cis-retinaldehyde which is the chromophore for rhodopsin and the cone photopigments. Required for the survival of cone photoreceptors and correct rod photoreceptor cell morphology. This chain is Lecithin retinol acyltransferase, found in Homo sapiens (Human).